The sequence spans 238 residues: E3 ubiquitin-protein ligase ZNRF2 (238 aa).

The disordered stretch occupies residues 1–137; that stretch reads MGAKQSGPAA…AGGGPGGPRL (137 aa). Gly-2 carries N-myristoyl glycine lipidation. Residues Ser-20, Ser-24, Ser-75, Ser-82, Ser-107, Ser-110, Ser-141, Ser-147, and Ser-189 each carry the phosphoserine modification. Over residues 35–77 the composition is skewed to low complexity; sequence GARAARFAAPVSGAQQPSASAGAAAAAAAAASAPAAPRSRSLG. The segment at 195-236 adopts an RING-type; atypical zinc-finger fold; it reads CAICLEELQQGDTIARLPCLCIYHKGCIDEWFEVNRSCPEHP.

In terms of assembly, interacts with UBE2N. Interacts with ZNRF1. Interacts (when phosphorylated) with YWHAE. Post-translationally, phosphorylated; leading to binding to YWHAE. Phosphorylated by MTOR at Ser-147 and dephosphorylated by PP6C. Ser-147 phosphorylation stimulates vesicle-to-cytosol translocation. As to expression, expressed primarily in the nervous system. Expression is more intense in the granular cell layer of hippocampus, Purkinje cell layer of the cerebellum and the granular cell layer of the olfactory bulb. Detected in sensory neurons but not expressed in sympatic or enteric neurons. Expressed in testis, adipose tissue, columnar epithelial cells of the gut.

It is found in the endosome membrane. It localises to the lysosome membrane. Its subcellular location is the presynaptic cell membrane. The protein localises to the cytoplasm. The catalysed reaction is S-ubiquitinyl-[E2 ubiquitin-conjugating enzyme]-L-cysteine + [acceptor protein]-L-lysine = [E2 ubiquitin-conjugating enzyme]-L-cysteine + N(6)-ubiquitinyl-[acceptor protein]-L-lysine.. It participates in protein modification; protein ubiquitination. E3 ubiquitin-protein ligase that plays a role in the establishment and maintenance of neuronal transmission and plasticity. Ubiquitinates the Na(+)/K(+) ATPase alpha-1 subunit/ATP1A1 and thereby influences its endocytosis and/or degradation. Also acts as a positive regulator of mTORC1 activation by amino acids, which functions upstream of the V-ATPase and of Rag-GTPases. In turn, phosphorylation by mTOR leads to its inhibition via targeting to the cytosol allowing a self-regulating feedback mechanism. This is E3 ubiquitin-protein ligase ZNRF2 (Znrf2) from Mus musculus (Mouse).